We begin with the raw amino-acid sequence, 473 residues long: Aspartyl/glutamyl-tRNA(Asn/Gln) amidotransferase subunit B (473 aa).

The protein belongs to the GatB/GatE family. GatB subfamily. Heterotrimer of A, B and C subunits.

The catalysed reaction is L-glutamyl-tRNA(Gln) + L-glutamine + ATP + H2O = L-glutaminyl-tRNA(Gln) + L-glutamate + ADP + phosphate + H(+). The enzyme catalyses L-aspartyl-tRNA(Asn) + L-glutamine + ATP + H2O = L-asparaginyl-tRNA(Asn) + L-glutamate + ADP + phosphate + 2 H(+). In terms of biological role, allows the formation of correctly charged Asn-tRNA(Asn) or Gln-tRNA(Gln) through the transamidation of misacylated Asp-tRNA(Asn) or Glu-tRNA(Gln) in organisms which lack either or both of asparaginyl-tRNA or glutaminyl-tRNA synthetases. The reaction takes place in the presence of glutamine and ATP through an activated phospho-Asp-tRNA(Asn) or phospho-Glu-tRNA(Gln). The protein is Aspartyl/glutamyl-tRNA(Asn/Gln) amidotransferase subunit B of Francisella tularensis subsp. novicida (strain U112).